The following is a 99-amino-acid chain: Putative membrane protein insertion efficiency factor (99 aa).

It belongs to the UPF0161 family.

Its subcellular location is the cell membrane. Functionally, could be involved in insertion of integral membrane proteins into the membrane. The protein is Putative membrane protein insertion efficiency factor of Corynebacterium efficiens (strain DSM 44549 / YS-314 / AJ 12310 / JCM 11189 / NBRC 100395).